We begin with the raw amino-acid sequence, 194 residues long: Thymidylate kinase (194 aa).

Residue 7–14 (GIDTAGKS) participates in ATP binding.

The protein belongs to the thymidylate kinase family.

The enzyme catalyses dTMP + ATP = dTDP + ADP. In terms of biological role, phosphorylation of dTMP to form dTDP in both de novo and salvage pathways of dTTP synthesis. The sequence is that of Thymidylate kinase from Nautilia profundicola (strain ATCC BAA-1463 / DSM 18972 / AmH).